The sequence spans 188 residues: Phosphoheptose isomerase (188 aa).

Residues 33–188 form the SIS domain; it reads VTASLRAGGK…CGLVEDALCS (156 aa). 48 to 50 provides a ligand contact to substrate; it reads NGG. H57 and E61 together coordinate Zn(2+). Substrate-binding positions include E61, 90-91, 116-118, S121, and Q168; these read ND and STS. Positions 168 and 176 each coordinate Zn(2+).

It belongs to the SIS family. GmhA subfamily. Homotetramer. The cofactor is Zn(2+).

It is found in the cytoplasm. The enzyme catalyses 2 D-sedoheptulose 7-phosphate = D-glycero-alpha-D-manno-heptose 7-phosphate + D-glycero-beta-D-manno-heptose 7-phosphate. It participates in carbohydrate biosynthesis; D-glycero-D-manno-heptose 7-phosphate biosynthesis; D-glycero-alpha-D-manno-heptose 7-phosphate and D-glycero-beta-D-manno-heptose 7-phosphate from sedoheptulose 7-phosphate: step 1/1. Its function is as follows. Catalyzes the isomerization of sedoheptulose 7-phosphate in D-glycero-D-manno-heptose 7-phosphate. The protein is Phosphoheptose isomerase of Rhodospirillum rubrum (strain ATCC 11170 / ATH 1.1.1 / DSM 467 / LMG 4362 / NCIMB 8255 / S1).